Here is a 279-residue protein sequence, read N- to C-terminus: Ethanolamine utilization protein EutJ (279 aa).

Belongs to the EutJ family.

Its pathway is amine and polyamine degradation; ethanolamine degradation. In terms of biological role, may protect ethanolamine ammonia-lyase (EAL, eutB-eutC) from inhibition, may function in assembling the bacterial microcompartment and/or in refolding EAL, suggesting it may have chaperone activity. Overexpression of eutJ and eutS in E.coli leads to multiple BMC-like structures; eutS expression alone leads to 1 BMC-like structure per cell. Its function is as follows. Expression of the eut operon allows this bacteria to use ethanolamine (EA) as a carbon, nitrogen and energy source. It relies on cobalamin (vitamin B12) both as a cofactor for the ethanolamine ammonia-lyase (EAL) activity and to induce the operon. EA enhances bacterial survival in macrophages in a concentration-dependent manner, suggesting it is an important nutrient during infection. The protein is Ethanolamine utilization protein EutJ of Salmonella typhimurium (strain LT2 / SGSC1412 / ATCC 700720).